The primary structure comprises 660 residues: Elongation factor 4 (660 aa).

The tr-type G domain maps to 55–241 (AQIRNFCIIA…EVVRQVPPPQ (187 aa)). GTP contacts are provided by residues 67 to 72 (DHGKST) and 188 to 191 (NKID).

It belongs to the TRAFAC class translation factor GTPase superfamily. Classic translation factor GTPase family. LepA subfamily.

Its subcellular location is the cell membrane. It carries out the reaction GTP + H2O = GDP + phosphate + H(+). In terms of biological role, required for accurate and efficient protein synthesis under certain stress conditions. May act as a fidelity factor of the translation reaction, by catalyzing a one-codon backward translocation of tRNAs on improperly translocated ribosomes. Back-translocation proceeds from a post-translocation (POST) complex to a pre-translocation (PRE) complex, thus giving elongation factor G a second chance to translocate the tRNAs correctly. Binds to ribosomes in a GTP-dependent manner. This is Elongation factor 4 from Mycolicibacterium paratuberculosis (strain ATCC BAA-968 / K-10) (Mycobacterium paratuberculosis).